Reading from the N-terminus, the 930-residue chain is Isoleucine--tRNA ligase (930 aa).

The 'HIGH' region motif lies at 57–67 (PYANGHLHIGH). Position 573 (E573) interacts with L-isoleucyl-5'-AMP. The short motif at 614–618 (KMSKS) is the 'KMSKS' region element. K617 contributes to the ATP binding site. Residues C902, C905, C918, and C921 each coordinate Zn(2+).

The protein belongs to the class-I aminoacyl-tRNA synthetase family. IleS type 1 subfamily. Monomer. It depends on Zn(2+) as a cofactor.

It localises to the cytoplasm. The catalysed reaction is tRNA(Ile) + L-isoleucine + ATP = L-isoleucyl-tRNA(Ile) + AMP + diphosphate. In terms of biological role, catalyzes the attachment of isoleucine to tRNA(Ile). As IleRS can inadvertently accommodate and process structurally similar amino acids such as valine, to avoid such errors it has two additional distinct tRNA(Ile)-dependent editing activities. One activity is designated as 'pretransfer' editing and involves the hydrolysis of activated Val-AMP. The other activity is designated 'posttransfer' editing and involves deacylation of mischarged Val-tRNA(Ile). The protein is Isoleucine--tRNA ligase of Helicobacter hepaticus (strain ATCC 51449 / 3B1).